The chain runs to 109 residues: Nucleoid-associated protein VP2178 (109 aa).

Disordered regions lie at residues Met1 to Gln22 and Gln88 to Phe109.

Belongs to the YbaB/EbfC family. Homodimer.

The protein resides in the cytoplasm. Its subcellular location is the nucleoid. Functionally, binds to DNA and alters its conformation. May be involved in regulation of gene expression, nucleoid organization and DNA protection. The chain is Nucleoid-associated protein VP2178 from Vibrio parahaemolyticus serotype O3:K6 (strain RIMD 2210633).